A 245-amino-acid polypeptide reads, in one-letter code: Ribosomal RNA small subunit methyltransferase J (245 aa).

S-adenosyl-L-methionine contacts are provided by residues 94-95 (RD), 110-111 (ER), and aspartate 164.

Belongs to the methyltransferase superfamily. RsmJ family.

Its subcellular location is the cytoplasm. The catalysed reaction is guanosine(1516) in 16S rRNA + S-adenosyl-L-methionine = N(2)-methylguanosine(1516) in 16S rRNA + S-adenosyl-L-homocysteine + H(+). Specifically methylates the guanosine in position 1516 of 16S rRNA. In Dechloromonas aromatica (strain RCB), this protein is Ribosomal RNA small subunit methyltransferase J.